Reading from the N-terminus, the 195-residue chain is UPF0167 protein CbrC (195 aa).

This sequence belongs to the UPF0167 family.

The sequence is that of UPF0167 protein CbrC (cbrC) from Escherichia coli (strain K12).